The chain runs to 432 residues: Adenosylmethionine-8-amino-7-oxononanoate aminotransferase (432 aa).

W52 lines the substrate pocket. 112–113 (GS) serves as a coordination point for pyridoxal 5'-phosphate. Y144 contacts substrate. Position 245 (D245) interacts with pyridoxal 5'-phosphate. Residues K274 and G307 each contribute to the substrate site. K274 carries the N6-(pyridoxal phosphate)lysine modification. Residue 308–309 (PT) participates in pyridoxal 5'-phosphate binding. R391 contacts substrate.

It belongs to the class-III pyridoxal-phosphate-dependent aminotransferase family. BioA subfamily. Homodimer. The cofactor is pyridoxal 5'-phosphate.

Its subcellular location is the cytoplasm. The enzyme catalyses (8S)-8-amino-7-oxononanoate + S-adenosyl-L-methionine = S-adenosyl-4-methylsulfanyl-2-oxobutanoate + (7R,8S)-7,8-diammoniononanoate. Its pathway is cofactor biosynthesis; biotin biosynthesis; 7,8-diaminononanoate from 8-amino-7-oxononanoate (SAM route): step 1/1. Its function is as follows. Catalyzes the transfer of the alpha-amino group from S-adenosyl-L-methionine (SAM) to 7-keto-8-aminopelargonic acid (KAPA) to form 7,8-diaminopelargonic acid (DAPA). It is the only aminotransferase known to utilize SAM as an amino donor. The sequence is that of Adenosylmethionine-8-amino-7-oxononanoate aminotransferase from Buchnera aphidicola subsp. Schizaphis graminum (strain Sg).